We begin with the raw amino-acid sequence, 483 residues long: Glutamyl-tRNA(Gln) amidotransferase subunit A (483 aa).

Catalysis depends on charge relay system residues Lys-76 and Ser-151. The active-site Acyl-ester intermediate is Ser-175.

This sequence belongs to the amidase family. GatA subfamily. Heterotrimer of A, B and C subunits.

The enzyme catalyses L-glutamyl-tRNA(Gln) + L-glutamine + ATP + H2O = L-glutaminyl-tRNA(Gln) + L-glutamate + ADP + phosphate + H(+). Functionally, allows the formation of correctly charged Gln-tRNA(Gln) through the transamidation of misacylated Glu-tRNA(Gln) in organisms which lack glutaminyl-tRNA synthetase. The reaction takes place in the presence of glutamine and ATP through an activated gamma-phospho-Glu-tRNA(Gln). This chain is Glutamyl-tRNA(Gln) amidotransferase subunit A, found in Pseudomonas putida (strain ATCC 47054 / DSM 6125 / CFBP 8728 / NCIMB 11950 / KT2440).